Here is a 157-residue protein sequence, read N- to C-terminus: SsrA-binding protein (157 aa).

Residues 133–157 (LHDKRETAKERDWQRDKARLMRDKG) are disordered. The segment covering 135–157 (DKRETAKERDWQRDKARLMRDKG) has biased composition (basic and acidic residues).

It belongs to the SmpB family.

Its subcellular location is the cytoplasm. Required for rescue of stalled ribosomes mediated by trans-translation. Binds to transfer-messenger RNA (tmRNA), required for stable association of tmRNA with ribosomes. tmRNA and SmpB together mimic tRNA shape, replacing the anticodon stem-loop with SmpB. tmRNA is encoded by the ssrA gene; the 2 termini fold to resemble tRNA(Ala) and it encodes a 'tag peptide', a short internal open reading frame. During trans-translation Ala-aminoacylated tmRNA acts like a tRNA, entering the A-site of stalled ribosomes, displacing the stalled mRNA. The ribosome then switches to translate the ORF on the tmRNA; the nascent peptide is terminated with the 'tag peptide' encoded by the tmRNA and targeted for degradation. The ribosome is freed to recommence translation, which seems to be the essential function of trans-translation. The sequence is that of SsrA-binding protein from Methylobacterium sp. (strain 4-46).